Consider the following 750-residue polypeptide: Small G protein signaling modulator 3 (750 aa).

One can recognise a Rab-GAP TBC domain in the interval 114-305 (GIPHGMRPQL…RIWDLFFYEG (192 aa)). Position 406 is a phosphoserine (Ser-406). Residues 415-439 (EDDLEALKAKNIKQTELVADLREAI) are a coiled coil. Residues 480 to 539 (SHRRRAKALLDFERHDDDELGFRKNDIITIISQKDEHCWVGELNGLRGWFPAKFVEVLDE) enclose the SH3 domain. The RUN domain maps to 555-718 (GVTDLVRGTL…FAFSLSQDWE (164 aa)).

Belongs to the small G protein signaling modulator family. As to quaternary structure, interacts with GJA1. Interaction with GJA1 induces its degradation. Interacts via its RUN domain with the C-terminal region of NF2. Interacts with RAB3A, RAB4A, RAB5A, RAB8A, RAB11A, RAP1A, RAP1B, RAP2A, RAP2B and PDCD6I. No interaction with RAB27A. Widely expressed.

The protein resides in the cytoplasm. May play a cooperative role in NF2-mediated growth suppression of cells. The sequence is that of Small G protein signaling modulator 3 from Mus musculus (Mouse).